Here is a 398-residue protein sequence, read N- to C-terminus: Glycerol-3-phosphate dehydrogenase [NAD(+)] 1 (398 aa).

Residues glycine 50–glycine 55, phenylalanine 138, lysine 161, and alanine 194 each bind NAD(+). Lysine 161 provides a ligand contact to substrate. The active-site Proton acceptor is lysine 253. NAD(+) contacts are provided by arginine 318 and glutamine 350. Position 318–319 (arginine 318–asparagine 319) interacts with substrate.

The protein belongs to the NAD-dependent glycerol-3-phosphate dehydrogenase family.

It localises to the cytoplasm. It carries out the reaction sn-glycerol 3-phosphate + NAD(+) = dihydroxyacetone phosphate + NADH + H(+). This Yarrowia lipolytica (strain CLIB 122 / E 150) (Yeast) protein is Glycerol-3-phosphate dehydrogenase [NAD(+)] 1 (GPD1).